We begin with the raw amino-acid sequence, 221 residues long: MNMNKYIDHTLLKPDATQEMIDKLCQEAREHDFMSVCVNPYWVKRSAELLAGSDVKVCTVIGFPLGASTIESKAAETRDAIANGATEVDMVLNVGALKSGDLETVKKDIAAVKQAAGDILLKVILETCLLTEEEKVVACKLSVEAGADYVKTSTGFSTGGATVEDIALMRKTVGPNVGVKASGGVRDGETAVAMIEAGASRIGTSSGVSIVTGAKTTGSGY.

The active-site Proton donor/acceptor is aspartate 89. The Schiff-base intermediate with acetaldehyde role is filled by lysine 151. Residue lysine 180 is the Proton donor/acceptor of the active site.

Belongs to the DeoC/FbaB aldolase family. DeoC type 1 subfamily.

The protein localises to the cytoplasm. It catalyses the reaction 2-deoxy-D-ribose 5-phosphate = D-glyceraldehyde 3-phosphate + acetaldehyde. The protein operates within carbohydrate degradation; 2-deoxy-D-ribose 1-phosphate degradation; D-glyceraldehyde 3-phosphate and acetaldehyde from 2-deoxy-alpha-D-ribose 1-phosphate: step 2/2. Its function is as follows. Catalyzes a reversible aldol reaction between acetaldehyde and D-glyceraldehyde 3-phosphate to generate 2-deoxy-D-ribose 5-phosphate. This chain is Deoxyribose-phosphate aldolase, found in Brevibacillus brevis (strain 47 / JCM 6285 / NBRC 100599).